Reading from the N-terminus, the 578-residue chain is Paraneoplastic antigen Ma6F (578 aa).

Disordered stretches follow at residues 106-221 and 441-578; these read AQPQ…AGAA and AAPV…PPGK. Over residues 112 to 129 the composition is skewed to low complexity; it reads AVARGAGEAGAAGEAGSV. Gly residues predominate over residues 147–159; the sequence is GGIGEAGGVGEAG. The segment covering 160–173 has biased composition (low complexity); that stretch reads AAGEAGAAGEAGAA. The span at 174-211 shows a compositional bias: gly residues; the sequence is GEAGGAGEAGGAGEAGGAGEEGGTGEEGGAGEAGGAGE. Over residues 449–461 the composition is skewed to low complexity; the sequence is PAAAQASPAQGDA. 2 stretches are compositionally biased toward acidic residues: residues 462–473 and 556–566; these read SEADPGAEDADE and EESENEDEDGA.

This Homo sapiens (Human) protein is Paraneoplastic antigen Ma6F.